Consider the following 398-residue polypeptide: 1-deoxy-D-xylulose 5-phosphate reductoisomerase (398 aa).

Thr10, Gly11, Ser12, Ile13, and Asn124 together coordinate NADPH. Position 125 (Lys125) interacts with 1-deoxy-D-xylulose 5-phosphate. Position 126 (Glu126) interacts with NADPH. A Mn(2+)-binding site is contributed by Asp150. Residues Ser151, Glu152, Ser186, and His209 each coordinate 1-deoxy-D-xylulose 5-phosphate. Glu152 provides a ligand contact to Mn(2+). Gly215 contributes to the NADPH binding site. Residues Ser222, Asn227, Lys228, and Glu231 each contribute to the 1-deoxy-D-xylulose 5-phosphate site. Mn(2+) is bound at residue Glu231.

It belongs to the DXR family. The cofactor is Mg(2+). Mn(2+) serves as cofactor.

It carries out the reaction 2-C-methyl-D-erythritol 4-phosphate + NADP(+) = 1-deoxy-D-xylulose 5-phosphate + NADPH + H(+). It functions in the pathway isoprenoid biosynthesis; isopentenyl diphosphate biosynthesis via DXP pathway; isopentenyl diphosphate from 1-deoxy-D-xylulose 5-phosphate: step 1/6. Catalyzes the NADPH-dependent rearrangement and reduction of 1-deoxy-D-xylulose-5-phosphate (DXP) to 2-C-methyl-D-erythritol 4-phosphate (MEP). In Tolumonas auensis (strain DSM 9187 / NBRC 110442 / TA 4), this protein is 1-deoxy-D-xylulose 5-phosphate reductoisomerase.